Reading from the N-terminus, the 62-residue chain is Metallothionein-4 (62 aa).

Positions 6, 8, 14, 16, 20, 22, 25, 27, 34, 35, 37, 38, 42, 45, 49, 51, 58, 60, and 61 each coordinate a divalent metal cation.

This sequence belongs to the metallothionein superfamily. Type 1 family.

Functionally, seems to bind zinc and copper. Could play a special role in regulating zinc metabolism during the differentiation of stratified epithelia. The chain is Metallothionein-4 (MT4) from Homo sapiens (Human).